The following is a 114-amino-acid chain: Pro-FMRFamide-related neuropeptide FF (114 aa).

The first 21 residues, 1-21, serve as a signal peptide directing secretion; that stretch reads MDSKWAALLLLLLLLLNWGHT. A propeptide spanning residues 22–69 is cleaved from the precursor; it reads EEAGSWGEDQVFAGEDKGPHPPQYAHIPDRIQTPGSLFRVLLQAMDTP. At Phe-82 the chain carries Phenylalanine amide. The propeptide occupies 85-100; the sequence is SAWGSWSKEQLNPQAR. Phe-111 is subject to Phenylalanine amide.

This sequence belongs to the FARP (FMRFamide related peptide) family.

Its subcellular location is the secreted. In terms of biological role, morphine modulating peptides. Have wide-ranging physiologic effects, including the modulation of morphine-induced analgesia, elevation of arterial blood pressure, and increased somatostatin secretion from the pancreas. Neuropeptide FF potentiates and sensitizes ASIC1 and ASIC3 channels. This chain is Pro-FMRFamide-related neuropeptide FF (Npff), found in Mus musculus (Mouse).